A 387-amino-acid polypeptide reads, in one-letter code: Trichocyst matrix protein T2-C (387 aa).

The N-terminal stretch at 1–19 is a signal peptide; that stretch reads MKTIILALALIVLASSTQA. A propeptide spanning residues 20-48 is cleaved from the precursor; the sequence is DVIATIKKIDQSPFGRTLFDTIWLELQTG. Residues 51–163 are a coiled coil; the sequence is LDRLLQTLTD…KVLEHQEATA (113 aa). Positions 184–239 are excised as a propeptide; that stretch reads KGKATKQPAHKFTKEVASMIQKHFTTSAKKAAKFQHRKGYSKLFKAFATIASKVEQ. A coiled-coil region spans residues 294–333; sequence TALANAQSDLAALNDVIAQVEASLDTTNQRIENVSADRND.

It belongs to the TMP family. Post-translationally, two components are produced by post-translational processing from the precursor peptide.

It localises to the trichocyst. Functionally, structural protein that crystallize inside the trichocyst matrix. The protein is Trichocyst matrix protein T2-C (T2C) of Paramecium tetraurelia.